Reading from the N-terminus, the 357-residue chain is Protein pelota homolog (357 aa).

This sequence belongs to the eukaryotic release factor 1 family. Pelota subfamily. In terms of assembly, monomer. Requires a divalent metal cation as cofactor.

The protein resides in the cytoplasm. Functionally, may function in recognizing stalled ribosomes, interact with stem-loop structures in stalled mRNA molecules, and effect endonucleolytic cleavage of the mRNA. May play a role in the release non-functional ribosomes and degradation of damaged mRNAs. Has endoribonuclease activity. In Thermococcus onnurineus (strain NA1), this protein is Protein pelota homolog.